Here is a 54-residue protein sequence, read N- to C-terminus: MEFTSALFGASLVQSKHKTTKKHNLVDSCCCSKPTEKPTNSCTCSKCACDSCKC.

Belongs to the metallothionein superfamily. Type 11 family.

The sequence is that of Metallothionein-2 (MTP2) from Yarrowia lipolytica (strain CLIB 122 / E 150) (Yeast).